The primary structure comprises 369 residues: Dehydrogenase pigH (369 aa).

An Enoyl reductase (ER) domain is found at 13-367 (KAPLLEVKAA…QGVSAKKIVV (355 aa)). Position 44-49 (44-49 (IDWLIQ)) interacts with NADP(+). Residues N79 and N101 are each glycosylated (N-linked (GlcNAc...) asparagine). NADP(+) is bound by residues 197–200 (SRKN) and Y215. Residues 280 to 300 (TIIFFVSWIISFKFKGLLKGI) traverse the membrane as a helical segment. An NADP(+)-binding site is contributed by 360-361 (VS).

This sequence belongs to the zinc-containing alcohol dehydrogenase family.

The protein localises to the membrane. The protein operates within secondary metabolite biosynthesis. In terms of biological role, dehydrogenase; part of the gene cluster that mediates the biosynthesis of azaphilone pigments (MonAzPs), a complex mixture of compounds with a common azaphilone skeleton very widely used as food colorants. Within the pathway, pigH might be involved in the late steps of yellow pigments monascin and ankaflavin biosynthesis. The first step of the pathway is performed by the nrPKS pigA that forms the hexaketide precursor from successive condensations of five malonyl-CoA units, with a simple acetyl-CoA starter unit. The role of esterase pigG is not clear, but it may play at most a supplementary role in the formation of the benzaldehyde produced by the pigA nrPKS. This very reactive benzaldehyde is intercepted by the pigC ketoreductase that to provide the first stable enzyme-free MonAzPs intermediate, 6-(4-hydroxy-2-oxopentyl)-3-methyl-2,4-dioxocyclohexane carbaldehyde, also known as M7PKS-1. The FAD-dependent monooxygenase pigN hydroxylates M7PKS-1 at C-4, which triggers the formation of the pyran ring. PigJ, pigK and pigD are involved in the acetylation of the pyran ring. PigJ and pigK form the two subunits of a dedicated fungal FAS that produces the side chain fatty acyl moiety of MonAzPs and pigD transfers the fatty acyl chain to the C-4 alcohol. PigM and pigO are involved in the elimination of the omega-1 alcohol. PigM acts as an O-acetyltransferase that synthesizes the putative O-11 acetyl intermediate whereas pigO eliminates acetic acid to yield an intermediate with a C10(11) double bond. The dehydration of the C-11 alcohol followed by the reduction of the C6(7) double bond by the NAD(P)H-dependent oxidoreductase pigE increases the electrophilicity of the C-5 ketone of the resulting acyl benzopyran. This in turn sets up the C-5 ketone for an intramolecular Knoevenagel aldol condensation with the C-20 enol of the side chain. This condensation affords the characteristic linear tricyclic carbon skeletons of the yellow pigments that serve as the common precursors for the classical yellow pigments monascin and ankaflavin, orange pigments rubopunctatin and monascorubrin, and red pigments ribropunctamine and monascorubramine. The FAD-dependent oxidoreductase pigF is especially invoved in the biosynthesis of orange and red pigments via desaturation of C6(7). The polypeptide is Dehydrogenase pigH (Monascus ruber (Mold)).